Reading from the N-terminus, the 115-residue chain is MNEMIRFPLQLTDSAINRIKTLIAEEANPHLKFRVYITGGGCSGLQYGFTFDDKVNEEDIAIEKQGVVLIVDPISLQYLLGGLVDYSEGLKGSRFFIINPNVQTTCSCGSSFSMT.

Cys42, Cys106, and Cys108 together coordinate iron-sulfur cluster.

This sequence belongs to the HesB/IscA family. As to quaternary structure, homodimer. Iron-sulfur cluster serves as cofactor.

Functionally, required for insertion of 4Fe-4S clusters for at least IspG. The protein is Iron-sulfur cluster insertion protein ErpA of Baumannia cicadellinicola subsp. Homalodisca coagulata.